Consider the following 408-residue polypeptide: Imidazolonepropionase (408 aa).

Fe(3+) contacts are provided by H73 and H75. Zn(2+) contacts are provided by H73 and H75. Residues R82, Y145, and H178 each coordinate 4-imidazolone-5-propanoate. An N-formimidoyl-L-glutamate-binding site is contributed by Y145. H243 contacts Fe(3+). Zn(2+) is bound at residue H243. Q246 lines the 4-imidazolone-5-propanoate pocket. D318 provides a ligand contact to Fe(3+). D318 contributes to the Zn(2+) binding site. N-formimidoyl-L-glutamate-binding residues include N320 and G322. A 4-imidazolone-5-propanoate-binding site is contributed by S323.

The protein belongs to the metallo-dependent hydrolases superfamily. HutI family. It depends on Zn(2+) as a cofactor. Fe(3+) is required as a cofactor.

It is found in the cytoplasm. It catalyses the reaction 4-imidazolone-5-propanoate + H2O = N-formimidoyl-L-glutamate. The protein operates within amino-acid degradation; L-histidine degradation into L-glutamate; N-formimidoyl-L-glutamate from L-histidine: step 3/3. Its function is as follows. Catalyzes the hydrolytic cleavage of the carbon-nitrogen bond in imidazolone-5-propanoate to yield N-formimidoyl-L-glutamate. It is the third step in the universal histidine degradation pathway. The polypeptide is Imidazolonepropionase (Shewanella putrefaciens (strain CN-32 / ATCC BAA-453)).